Here is a 118-residue protein sequence, read N- to C-terminus: Small ribosomal subunit protein uS13 (118 aa).

The disordered stretch occupies residues 94 to 118 (SLPLRGQRTKTNARTRKGPRKPIRK).

This sequence belongs to the universal ribosomal protein uS13 family. As to quaternary structure, part of the 30S ribosomal subunit. Forms a loose heterodimer with protein S19. Forms two bridges to the 50S subunit in the 70S ribosome.

In terms of biological role, located at the top of the head of the 30S subunit, it contacts several helices of the 16S rRNA. In the 70S ribosome it contacts the 23S rRNA (bridge B1a) and protein L5 of the 50S subunit (bridge B1b), connecting the 2 subunits; these bridges are implicated in subunit movement. Contacts the tRNAs in the A and P-sites. This chain is Small ribosomal subunit protein uS13, found in Shewanella violacea (strain JCM 10179 / CIP 106290 / LMG 19151 / DSS12).